The chain runs to 568 residues: MAGUK p55 subfamily member 3 (568 aa).

L27 domains lie at 6 to 60 (EDSG…ERQS) and 61 to 118 (PTPV…FDPV). Residues 137–218 (IVRLVKNKEP…SITLKIIPAT (82 aa)) form the PDZ domain. Positions 226 to 296 (DSKVFMRALF…PSKQFQERRL (71 aa)) constitute an SH3 domain. Phosphoserine is present on Ser-307. Residues 385–568 (PRLVVLIGSL…QEPAASSELS (184 aa)) enclose the Guanylate kinase-like domain.

It belongs to the MAGUK family. In terms of assembly, interacts with HTR2C; this interaction stabilizes the receptor at the plasma membrane and prevents the desensitization of the HTR2C receptor-mediated calcium response. Interacts with HTR2A. Interacts with HTR4. Interacts (via PDZ domain) with CADM1 (via C-terminus)Interacts (via PDZ domain) with CADM1; this interaction connects CADM1 with DLG1. Interacts (via Guanylate kinase-like domain) with PALS1. Interacts with DLG1 (via N-terminus); this interaction connects CADM1 with DLG1 and links CADM1 with the regulatory subunit of phosphoinositide-3-kinase (PI3K) by forming a multiprotein complex and participates in cell spreading. Expressed in brain, skeletal muscle, testis, kidney, and lung.

The protein resides in the apical cell membrane. It is found in the cell membrane. The protein localises to the cell junction. It localises to the adherens junction. In terms of biological role, participates in cell spreading through the phosphoinositide-3-kinase (PI3K) pathway by connecting CADM1 to DLG1 and the regulatory subunit of phosphoinositide-3-kinase (PI3K). Stabilizes HTR2C at the plasma membrane and prevents its desensitization. May participates in the maintenance of adherens junctions. The sequence is that of MAGUK p55 subfamily member 3 from Mus musculus (Mouse).